Reading from the N-terminus, the 599-residue chain is Sulfite reductase [NADPH] flavoprotein alpha-component (599 aa).

One can recognise a Flavodoxin-like domain in the interval 64 to 202 (ITIISASQTG…AASEWRARVV (139 aa)). FMN-binding positions include 70–75 (SQTGNA), 117–120 (STQG), and 153–162 (LGDSSYEFFC). One can recognise an FAD-binding FR-type domain in the interval 234 to 448 (DAPLVASLSV…IEHNDNFRLP (215 aa)). FAD-binding positions include Thr322, Ala356, 386–389 (RLYS), 404–406 (TVG), Tyr410, and 419–422 (GGAS). NADP(+) contacts are provided by residues 519-520 (SR), 525-529 (KVYVQ), and Asp561. Position 599 (Tyr599) interacts with FAD.

It belongs to the NADPH-dependent sulphite reductase flavoprotein subunit CysJ family. In the N-terminal section; belongs to the flavodoxin family. This sequence in the C-terminal section; belongs to the flavoprotein pyridine nucleotide cytochrome reductase family. Alpha(8)-beta(8). The alpha component is a flavoprotein, the beta component is a hemoprotein. Requires FAD as cofactor. The cofactor is FMN.

It catalyses the reaction hydrogen sulfide + 3 NADP(+) + 3 H2O = sulfite + 3 NADPH + 4 H(+). It functions in the pathway sulfur metabolism; hydrogen sulfide biosynthesis; hydrogen sulfide from sulfite (NADPH route): step 1/1. Its function is as follows. Component of the sulfite reductase complex that catalyzes the 6-electron reduction of sulfite to sulfide. This is one of several activities required for the biosynthesis of L-cysteine from sulfate. The flavoprotein component catalyzes the electron flow from NADPH -&gt; FAD -&gt; FMN to the hemoprotein component. The sequence is that of Sulfite reductase [NADPH] flavoprotein alpha-component from Shigella boydii serotype 4 (strain Sb227).